The chain runs to 354 residues: Uroporphyrinogen decarboxylase (354 aa).

Substrate contacts are provided by residues 27–31, aspartate 77, tyrosine 154, threonine 209, and histidine 327; that span reads RQAGR.

Belongs to the uroporphyrinogen decarboxylase family. Homodimer.

Its subcellular location is the cytoplasm. It catalyses the reaction uroporphyrinogen III + 4 H(+) = coproporphyrinogen III + 4 CO2. The protein operates within porphyrin-containing compound metabolism; protoporphyrin-IX biosynthesis; coproporphyrinogen-III from 5-aminolevulinate: step 4/4. Functionally, catalyzes the decarboxylation of four acetate groups of uroporphyrinogen-III to yield coproporphyrinogen-III. This is Uroporphyrinogen decarboxylase from Edwardsiella ictaluri (strain 93-146).